A 600-amino-acid polypeptide reads, in one-letter code: CDK5RAP1-like protein (600 aa).

The disordered stretch occupies residues 45-66; that stretch reads LSSAAHPPPPPPRRLARSGPSR. The 130-residue stretch at 93–222 folds into the MTTase N-terminal domain; that stretch reads GRIYHETYGC…LPRLLQEVDY (130 aa). Residues Cys102, Cys139, Cys185, Cys260, Cys264, and Cys267 each contribute to the [4Fe-4S] cluster site. Residues 246–501 form the Radical SAM core domain; it reads SDNSVTAFVS…ISTFRETTAK (256 aa). Residues 504-580 form the TRAM domain; the sequence is DSQVGTVQLV…TASLSGDVIA (77 aa).

Belongs to the methylthiotransferase family. MiaB subfamily. [4Fe-4S] cluster is required as a cofactor.

In terms of biological role, potential regulator of CDK5 activity. The sequence is that of CDK5RAP1-like protein from Oryza sativa subsp. japonica (Rice).